A 257-amino-acid polypeptide reads, in one-letter code: Transcription factor GHD7 (257 aa).

At S68 the chain carries Phosphoserine; by CK1. In terms of domain architecture, CCT spans R190 to E232. The Nuclear localization signal motif lies at K198–R204. A disordered region spans residues R226–V245.

As to quaternary structure, interacts with HD16/EL1. Phosphorylated at Ser-68 by HD16/EL1, a casein kinase 1. Expressed in the apical meristem, developing leaves, leaf sheaths of young seedling, root meristem, epidermal layer of developing stems and branch-primordia of developing panicles.

The protein localises to the nucleus. In terms of biological role, probable transcription factor involved in the regulation of flowering time under long day (LD) conditions. Plays a major role as repressor of flowering. Controls flowering time by negatively regulating the expression of EHD1 and HD3A. The sequence is that of Transcription factor GHD7 from Oryza sativa subsp. japonica (Rice).